Consider the following 322-residue polypeptide: Undecaprenyl-phosphate 4-deoxy-4-formamido-L-arabinose transferase (322 aa).

At Met-1–Met-235 the chain is on the cytoplasmic side. Residues Leu-236 to Ile-256 traverse the membrane as a helical segment. Over Leu-257–Gly-269 the chain is Periplasmic. The chain crosses the membrane as a helical span at residues Val-270–Leu-290. The Cytoplasmic segment spans residues Leu-291–Glu-322.

This sequence belongs to the glycosyltransferase 2 family.

The protein localises to the cell inner membrane. It catalyses the reaction UDP-4-deoxy-4-formamido-beta-L-arabinose + di-trans,octa-cis-undecaprenyl phosphate = 4-deoxy-4-formamido-alpha-L-arabinopyranosyl di-trans,octa-cis-undecaprenyl phosphate + UDP. The protein operates within glycolipid biosynthesis; 4-amino-4-deoxy-alpha-L-arabinose undecaprenyl phosphate biosynthesis; 4-amino-4-deoxy-alpha-L-arabinose undecaprenyl phosphate from UDP-4-deoxy-4-formamido-beta-L-arabinose and undecaprenyl phosphate: step 1/2. Its pathway is bacterial outer membrane biogenesis; lipopolysaccharide biosynthesis. Catalyzes the transfer of 4-deoxy-4-formamido-L-arabinose from UDP to undecaprenyl phosphate. The modified arabinose is attached to lipid A and is required for resistance to polymyxin and cationic antimicrobial peptides. The protein is Undecaprenyl-phosphate 4-deoxy-4-formamido-L-arabinose transferase of Escherichia coli O157:H7 (strain EC4115 / EHEC).